Reading from the N-terminus, the 398-residue chain is Cell division protein FtsZ (398 aa).

GTP contacts are provided by residues 24–28 (GAGGN), 111–113 (GTG), glutamate 154, arginine 158, and aspartate 202. A disordered region spans residues 333-381 (GRNNKSETSPISQSEDSEKEKFKWPYSQSESTQDKTLETKPAEQVSEGA). Over residues 364 to 373 (TQDKTLETKP) the composition is skewed to basic and acidic residues.

Belongs to the FtsZ family. As to quaternary structure, homodimer. Polymerizes to form a dynamic ring structure in a strictly GTP-dependent manner. Interacts directly with several other division proteins.

It is found in the cytoplasm. Essential cell division protein that forms a contractile ring structure (Z ring) at the future cell division site. The regulation of the ring assembly controls the timing and the location of cell division. One of the functions of the FtsZ ring is to recruit other cell division proteins to the septum to produce a new cell wall between the dividing cells. Binds GTP and shows GTPase activity. This chain is Cell division protein FtsZ, found in Wolbachia sp.